The sequence spans 808 residues: Glycerol-3-phosphate acyltransferase (808 aa).

The HXXXXD motif signature appears at 306 to 311 (HRSHMD).

It belongs to the GPAT/DAPAT family.

The protein localises to the cell inner membrane. The catalysed reaction is sn-glycerol 3-phosphate + an acyl-CoA = a 1-acyl-sn-glycero-3-phosphate + CoA. The protein operates within phospholipid metabolism; CDP-diacylglycerol biosynthesis; CDP-diacylglycerol from sn-glycerol 3-phosphate: step 1/3. The protein is Glycerol-3-phosphate acyltransferase of Vibrio parahaemolyticus serotype O3:K6 (strain RIMD 2210633).